The chain runs to 285 residues: Methionine aminopeptidase 2 (285 aa).

Position 114 (histidine 114) interacts with substrate. A divalent metal cation-binding residues include aspartate 131, aspartate 142, and histidine 205. Histidine 212 provides a ligand contact to substrate. The a divalent metal cation site is built by glutamate 238 and glutamate 269.

As to quaternary structure, monomer. The cofactor is Co(2+). Zn(2+) is required as a cofactor. It depends on Mn(2+) as a cofactor. Fe(2+) serves as cofactor.

The catalysed reaction is Release of N-terminal amino acids, preferentially methionine, from peptides and arylamides.. With respect to regulation, inhibited by bengamide derivatives and by various metalloform-selective inhibitors. Functionally, removes the N-terminal methionine from nascent proteins. The N-terminal methionine is often cleaved when the second residue in the primary sequence is small and uncharged (Met-Ala-, Cys, Gly, Pro, Ser, Thr, or Val). Requires deformylation of the N(alpha)-formylated initiator methionine before it can be hydrolyzed. The sequence is that of Methionine aminopeptidase 2 from Mycobacterium tuberculosis (strain ATCC 25618 / H37Rv).